The sequence spans 386 residues: Succinate--CoA ligase [ADP-forming] subunit beta (386 aa).

The ATP-grasp domain occupies 9 to 244 (KALLRAAGIK…TTQEDHRETQ (236 aa)). Residues Lys-46, 53–55 (GRG), Glu-100, and Arg-103 contribute to the ATP site. Residues Asn-199 and Asp-213 each coordinate Mg(2+). Residues Asn-264 and 321 to 323 (GIV) contribute to the substrate site.

This sequence belongs to the succinate/malate CoA ligase beta subunit family. As to quaternary structure, heterotetramer of two alpha and two beta subunits. The cofactor is Mg(2+).

The enzyme catalyses succinate + ATP + CoA = succinyl-CoA + ADP + phosphate. The catalysed reaction is GTP + succinate + CoA = succinyl-CoA + GDP + phosphate. It functions in the pathway carbohydrate metabolism; tricarboxylic acid cycle; succinate from succinyl-CoA (ligase route): step 1/1. In terms of biological role, succinyl-CoA synthetase functions in the citric acid cycle (TCA), coupling the hydrolysis of succinyl-CoA to the synthesis of either ATP or GTP and thus represents the only step of substrate-level phosphorylation in the TCA. The beta subunit provides nucleotide specificity of the enzyme and binds the substrate succinate, while the binding sites for coenzyme A and phosphate are found in the alpha subunit. The sequence is that of Succinate--CoA ligase [ADP-forming] subunit beta from Dichelobacter nodosus (strain VCS1703A).